The sequence spans 176 residues: NAD(P)H-quinone oxidoreductase subunit 6, chloroplastic (176 aa).

The next 5 membrane-spanning stretches (helical) occupy residues 10 to 30 (FLLV…VLLP), 32 to 52 (PIFS…LYIL), 61 to 81 (AQLL…VMFM), 92 to 112 (LWTV…FSLM), and 152 to 172 (FFLP…GAIS).

It belongs to the complex I subunit 6 family. In terms of assembly, NDH is composed of at least 16 different subunits, 5 of which are encoded in the nucleus.

The protein resides in the plastid. It is found in the chloroplast thylakoid membrane. It catalyses the reaction a plastoquinone + NADH + (n+1) H(+)(in) = a plastoquinol + NAD(+) + n H(+)(out). The enzyme catalyses a plastoquinone + NADPH + (n+1) H(+)(in) = a plastoquinol + NADP(+) + n H(+)(out). NDH shuttles electrons from NAD(P)H:plastoquinone, via FMN and iron-sulfur (Fe-S) centers, to quinones in the photosynthetic chain and possibly in a chloroplast respiratory chain. The immediate electron acceptor for the enzyme in this species is believed to be plastoquinone. Couples the redox reaction to proton translocation, and thus conserves the redox energy in a proton gradient. The chain is NAD(P)H-quinone oxidoreductase subunit 6, chloroplastic (ndhG) from Nasturtium officinale (Watercress).